A 118-amino-acid polypeptide reads, in one-letter code: Small ribosomal subunit protein uS13 (118 aa).

Positions His91–Lys118 are disordered.

It belongs to the universal ribosomal protein uS13 family. Part of the 30S ribosomal subunit. Forms a loose heterodimer with protein S19. Forms two bridges to the 50S subunit in the 70S ribosome.

Located at the top of the head of the 30S subunit, it contacts several helices of the 16S rRNA. In the 70S ribosome it contacts the 23S rRNA (bridge B1a) and protein L5 of the 50S subunit (bridge B1b), connecting the 2 subunits; these bridges are implicated in subunit movement. Contacts the tRNAs in the A and P-sites. This is Small ribosomal subunit protein uS13 from Sodalis glossinidius (strain morsitans).